Reading from the N-terminus, the 451-residue chain is Ammonium transporter Rh type B (451 aa).

At 1–11 the chain is on the cytoplasmic side; that stretch reads MADVSTSMRLK. A helical transmembrane segment spans residues 12–32; the sequence is LPVVCFILEIILIILFGALVQ. Residues 33–63 lie on the Extracellular side of the membrane; it reads YDYETDAKEWHNQSHNDYENDFYFRYPSFQD. A glycan (N-linked (GlcNAc...) asparagine) is linked at asparagine 44. Residues 64-84 form a helical membrane-spanning segment; the sequence is VHVMIFIGFGFLMTFLQKYGF. The Cytoplasmic portion of the chain corresponds to 85-87; the sequence is GSV. A helical transmembrane segment spans residues 88–108; it reads GFNFLIAAFSLQWATLMQGFF. Topologically, residues 109–121 are extracellular; sequence HGMHGGKIHVGVE. The helical transmembrane segment at 122–142 threads the bilayer; the sequence is SMINADFCTGSVLISFGAVLG. The Cytoplasmic portion of the chain corresponds to 143–151; the sequence is KTSPIQLLT. A helical membrane pass occupies residues 152–172; sequence MAMFEVTLFAVNEFILLSLLG. Residues 173–176 are Extracellular-facing; sequence TRDA. Residues 177 to 197 traverse the membrane as a helical segment; that stretch reads GGSMTIHTFGAYFGLMVTRIL. The Cytoplasmic segment spans residues 198–216; the sequence is YRPHLDKSKHRNSSVYHSD. Residues 217-237 traverse the membrane as a helical segment; that stretch reads LFAMIGTIYLWMFWPSFNSAI. Topologically, residues 238 to 247 are extracellular; the sequence is TAHGDDQHRT. The helical transmembrane segment at 248–270 threads the bilayer; sequence ALNTYYSLAACTLATYGMSAVTS. At 271–274 the chain is on the cytoplasmic side; sequence HDGK. Residues 275–295 traverse the membrane as a helical segment; it reads LDMVHIQNAALAGGVAVGTAG. Topologically, residues 296–298 are extracellular; it reads EMM. The helical transmembrane segment at 299 to 319 threads the bilayer; it reads LTPFGSMIVGFLAGIISVLGF. Residues 320–340 lie on the Cytoplasmic side of the membrane; the sequence is KFLSPILESKLKIQDTCGVHN. Residues 341-361 traverse the membrane as a helical segment; it reads LHGMPGVLGAIVGAVTAALAT. Residues 362–390 lie on the Extracellular side of the membrane; it reads MDVYGKGMEDVFPAVADGSIDASKQGGVQ. The chain crosses the membrane as a helical span at residues 391-411; that stretch reads ALSLAITLGIALLGGLIVVFG. Over 412–451 the chain is Cytoplasmic; it reads TPPDTLCFEDGVYWEVPESEAPHEAQLTTVRTEETEKLSS.

It belongs to the ammonium transporter (TC 2.A.49) family. Rh subfamily.

The protein resides in the basolateral cell membrane. It localises to the cytoplasmic vesicle membrane. Functions as an ammonia transporter. May play a role in the elimination of ammonia in the gill. This Tetraodon nigroviridis (Spotted green pufferfish) protein is Ammonium transporter Rh type B (rhbg).